The primary structure comprises 547 residues: Phenylalanine--tRNA ligase beta subunit (547 aa).

Residues 269–344 (LDVRFMEVDV…IGYGYENITP (76 aa)) form the B5 domain. 4 residues coordinate Mg(2+): Asp-322, Asp-328, Glu-331, and Asp-332.

The protein belongs to the phenylalanyl-tRNA synthetase beta subunit family. Type 2 subfamily. As to quaternary structure, tetramer of two alpha and two beta subunits. Mg(2+) serves as cofactor.

It localises to the cytoplasm. It catalyses the reaction tRNA(Phe) + L-phenylalanine + ATP = L-phenylalanyl-tRNA(Phe) + AMP + diphosphate + H(+). The polypeptide is Phenylalanine--tRNA ligase beta subunit (Archaeoglobus fulgidus (strain ATCC 49558 / DSM 4304 / JCM 9628 / NBRC 100126 / VC-16)).